Here is a 308-residue protein sequence, read N- to C-terminus: Cyclopropane mycolic acid synthase 2 (308 aa).

Residues 44–45 (YS), 79–87 (LLDIGCGWG), 105–110 (TLSANQ), and 137–138 (WE) each bind S-adenosyl-L-methionine. The active site involves Cys-290.

Belongs to the CFA/CMAS family. As to quaternary structure, homodimer.

The protein localises to the cytoplasm. The catalysed reaction is a 1-acyl-2-(9Z)-enoyl-sn-glycero-3-phospholipid + S-adenosyl-L-methionine = a 1-acyl-2-(9-cyclopronane)-acyl-sn-glycero-3-phospholipid + S-adenosyl-L-homocysteine + H(+). The protein operates within lipid metabolism; mycolic acid biosynthesis. Catalyzes the formation of trans cyclopropanated ketomycolate or methoxymycolate through the conversion of a double bond to a cyclopropane ring at the proximal position of an oxygenated mycolic acid via the transfer of a methylene group from S-adenosyl-L-methionine. In the absence of MmaA2, CmaA2 has a non-specific cis-cyclopropanating activity and is able to catalyze the conversion of a double bond to a cis cyclopropane ring at the distal position of an alpha mycolic acid. Cyclopropanated mycolic acids are key factors participating in cell envelope permeability, host immunomodulation and persistence. This Mycobacterium leprae (strain TN) protein is Cyclopropane mycolic acid synthase 2 (cmaA2).